Here is a 354-residue protein sequence, read N- to C-terminus: Replication factor C subunit 5 (354 aa).

Residue 40–47 coordinates ATP; the sequence is YGPSGSGK.

This sequence belongs to the activator 1 small subunits family. As to quaternary structure, heterotetramer of subunits RFC2, RFC3, RFC4 and RFC5 that can form a complex with RFC1. As to expression, expressed in roots, leaves, shoot apical meristem (SAM), flag leaves and panicles.

It is found in the nucleus. May be involved in DNA replication and thus regulate cell proliferation. This chain is Replication factor C subunit 5 (RFC5), found in Oryza sativa subsp. japonica (Rice).